A 325-amino-acid polypeptide reads, in one-letter code: ADP-L-glycero-D-manno-heptose-6-epimerase (325 aa).

Residues 10-11 (FI), 31-32 (DD), K38, and 75-79 (EGACS) contribute to the NADP(+) site. The Proton acceptor role is filled by Y139. NADP(+) is bound at residue K143. A substrate-binding site is contributed by N167. 2 residues coordinate NADP(+): V168 and K176. K176 acts as the Proton acceptor in catalysis. Residues S178, H185, 199–202 (FEGS), R212, and Y285 contribute to the substrate site.

It belongs to the NAD(P)-dependent epimerase/dehydratase family. HldD subfamily. As to quaternary structure, homopentamer. It depends on NADP(+) as a cofactor.

It carries out the reaction ADP-D-glycero-beta-D-manno-heptose = ADP-L-glycero-beta-D-manno-heptose. Its pathway is nucleotide-sugar biosynthesis; ADP-L-glycero-beta-D-manno-heptose biosynthesis; ADP-L-glycero-beta-D-manno-heptose from D-glycero-beta-D-manno-heptose 7-phosphate: step 4/4. Functionally, catalyzes the interconversion between ADP-D-glycero-beta-D-manno-heptose and ADP-L-glycero-beta-D-manno-heptose via an epimerization at carbon 6 of the heptose. This chain is ADP-L-glycero-D-manno-heptose-6-epimerase, found in Azoarcus sp. (strain BH72).